The primary structure comprises 210 residues: ATP phosphoribosyltransferase (210 aa).

Belongs to the ATP phosphoribosyltransferase family. Short subfamily. As to quaternary structure, heteromultimer composed of HisG and HisZ subunits.

It localises to the cytoplasm. The enzyme catalyses 1-(5-phospho-beta-D-ribosyl)-ATP + diphosphate = 5-phospho-alpha-D-ribose 1-diphosphate + ATP. It participates in amino-acid biosynthesis; L-histidine biosynthesis; L-histidine from 5-phospho-alpha-D-ribose 1-diphosphate: step 1/9. Its function is as follows. Catalyzes the condensation of ATP and 5-phosphoribose 1-diphosphate to form N'-(5'-phosphoribosyl)-ATP (PR-ATP). Has a crucial role in the pathway because the rate of histidine biosynthesis seems to be controlled primarily by regulation of HisG enzymatic activity. The sequence is that of ATP phosphoribosyltransferase (hisG) from Synechocystis sp. (strain ATCC 27184 / PCC 6803 / Kazusa).